The sequence spans 216 residues: Pentapeptide repeat protein VPA0095 (216 aa).

The protein belongs to the pentapeptide repeat protein family.

Has no effect when overexpressed in E.coli. When Cys-115 is mutated to Tyr and overexpressed it increases (fluoro)quinolone resistance in E.coli up to 16-fold for ciprofloxacin, levofloxacin and nalidixic acid. The protein is Pentapeptide repeat protein VPA0095 of Vibrio parahaemolyticus serotype O3:K6 (strain RIMD 2210633).